The primary structure comprises 348 residues: Glycerol-1-phosphate dehydrogenase [NAD(P)+] (348 aa).

Residues glycine 94–aspartate 98 and threonine 116 each bind NAD(+). Aspartate 121 is a substrate binding site. Serine 125 is an NAD(+) binding site. Aspartate 168 contacts substrate. Zn(2+)-binding residues include aspartate 168 and histidine 248. Substrate is bound at residue histidine 252. Position 264 (histidine 264) interacts with Zn(2+).

Belongs to the glycerol-1-phosphate dehydrogenase family. In terms of assembly, homooctamer. Zn(2+) serves as cofactor.

The protein resides in the cytoplasm. The catalysed reaction is sn-glycerol 1-phosphate + NAD(+) = dihydroxyacetone phosphate + NADH + H(+). It carries out the reaction sn-glycerol 1-phosphate + NADP(+) = dihydroxyacetone phosphate + NADPH + H(+). Its pathway is membrane lipid metabolism; glycerophospholipid metabolism. In terms of biological role, catalyzes the NAD(P)H-dependent reduction of dihydroxyacetonephosphate (DHAP or glycerone phosphate) to glycerol 1-phosphate (G1P). The G1P thus generated is used as the glycerophosphate backbone of phospholipids in the cellular membranes of Archaea. This Methanosphaera stadtmanae (strain ATCC 43021 / DSM 3091 / JCM 11832 / MCB-3) protein is Glycerol-1-phosphate dehydrogenase [NAD(P)+].